The sequence spans 866 residues: Probable outer membrane usher protein ElfC (866 aa).

Residues 1 to 35 (MYRTHRQHSLLSSGGVPSFIGGLVVFVSAAFNAQA) form the signal peptide.

This sequence belongs to the fimbrial export usher family.

Its subcellular location is the cell outer membrane. Its function is as follows. Part of the elfADCG fimbrial operon, which could be required for adherence to host epithelial cells. Could be involved in the export and assembly of the ElfA fimbrial subunits across the outer membrane. This is Probable outer membrane usher protein ElfC (elfC) from Escherichia coli O157:H7.